Here is a 154-residue protein sequence, read N- to C-terminus: Myoglobin (154 aa).

The 147-residue stretch at 2–148 folds into the Globin domain; the sequence is GLSDGEWQLV…FRNDIAAKYK (147 aa). Serine 4 carries the phosphoserine modification. Position 65 (histidine 65) interacts with nitrite. Position 65 (histidine 65) interacts with O2. Residue threonine 68 is modified to Phosphothreonine. Residue histidine 94 participates in heme b binding.

It belongs to the globin family. In terms of assembly, monomeric.

It localises to the cytoplasm. Its subcellular location is the sarcoplasm. It catalyses the reaction Fe(III)-heme b-[protein] + nitric oxide + H2O = Fe(II)-heme b-[protein] + nitrite + 2 H(+). The enzyme catalyses H2O2 + AH2 = A + 2 H2O. In terms of biological role, monomeric heme protein which primary function is to store oxygen and facilitate its diffusion within muscle tissues. Reversibly binds oxygen through a pentacoordinated heme iron and enables its timely and efficient release as needed during periods of heightened demand. Depending on the oxidative conditions of tissues and cells, and in addition to its ability to bind oxygen, it also has a nitrite reductase activity whereby it regulates the production of bioactive nitric oxide. Under stress conditions, like hypoxia and anoxia, it also protects cells against reactive oxygen species thanks to its pseudoperoxidase activity. The sequence is that of Myoglobin (MB) from Sciurus vulgaris (Eurasian red squirrel).